Reading from the N-terminus, the 484-residue chain is Fumarate hydratase class II (484 aa).

Residues Met1 to Ser22 are disordered. Substrate contacts are provided by residues Ser110 to Thr112, His141 to Asp144, Ser151 to Asn153, and Thr199. The Proton donor/acceptor role is filled by His200. Ser330 is an active-site residue. Residues Ser331 and Lys336–Asn338 contribute to the substrate site.

This sequence belongs to the class-II fumarase/aspartase family. Fumarase subfamily. In terms of assembly, homotetramer.

Its subcellular location is the cytoplasm. The catalysed reaction is (S)-malate = fumarate + H2O. The protein operates within carbohydrate metabolism; tricarboxylic acid cycle; (S)-malate from fumarate: step 1/1. Its function is as follows. Involved in the TCA cycle. Catalyzes the stereospecific interconversion of fumarate to L-malate. This chain is Fumarate hydratase class II, found in Methanosarcina acetivorans (strain ATCC 35395 / DSM 2834 / JCM 12185 / C2A).